We begin with the raw amino-acid sequence, 490 residues long: Kinetochore protein Nuf2 homolog (490 aa).

Coiled-coil stretches lie at residues 146–280 (DRKF…KLEA) and 310–407 (DLID…SETI). Disordered stretches follow at residues 346 to 365 (QSET…EERQ) and 468 to 490 (IDAG…SVFK).

Belongs to the NUF2 family. As to quaternary structure, component of the NDC80 complex, which is composed of at least ndc-80 and him-10. The NDC80 complex interacts with knl-1.

The protein resides in the nucleus. Its subcellular location is the chromosome. The protein localises to the centromere. It is found in the kinetochore. Functionally, acts as a component of the essential kinetochore-associated NDC80 complex, which is required for chromosome segregation in mitosis and meiosis and spindle checkpoint activity. The ndc-80 complex synergistically enhances the affinity of the ska-1 complex for microtubules and may allow the ndc-80 complex to track depolymerizing microtubules. The polypeptide is Kinetochore protein Nuf2 homolog (him-10) (Caenorhabditis elegans).